Consider the following 355-residue polypeptide: Cyclic nucleotide-gated potassium channel RHE_CH03180 (355 aa).

Over 1–12 (MSAVPFSKISTP) the chain is Cytoplasmic. A helical transmembrane segment spans residues 13 to 30 (LNALFATIGLLVVAALTT). The Periplasmic segment spans residues 31 to 38 (QGLTGQER). A helical membrane pass occupies residues 39–61 (LVFELLLAAIWLAYVLQLSGTLL). The Cytoplasmic portion of the chain corresponds to 62–73 (SRRRRLSGEMTA). A helical transmembrane segment spans residues 74-93 (LVIDLLAVLVPAAAFLFVGS). The chain crosses the membrane as a helical span at residues 94 to 111 (RDRDLYCAIWLLKPLRDS). Residues 112 to 128 (TFFRLLAKVVANESRNL) lie on the Cytoplasmic side of the membrane. A helical transmembrane segment spans residues 129–149 (LGVTSVFGIVLFGAALAGYII). Residues 150-160 (ERDVQPDKFGS) lie on the Periplasmic side of the membrane. The pore-forming intramembrane region spans 161-179 (IPQAMWWAVVTLSTTGYGD). The Selectivity filter motif lies at 174-179 (TTGYGD). Over 180–184 (EIPQS) the chain is Periplasmic. A helical transmembrane segment spans residues 185–209 (LAGRVLAGLVMMSGIGIFALWAGIL). Topologically, residues 210–355 (ATGFYEEVRR…LERRGGPPKE (146 aa)) are cytoplasmic. 3',5'-cyclic AMP-binding positions include 297–298 (GE), 307–308 (RS), and Arg-348.

The protein belongs to the potassium channel family. In terms of assembly, homotetramer.

It localises to the cell membrane. Functionally, cyclic nucleotide-regulated potassium channel activated by cAMP. The protein is Cyclic nucleotide-gated potassium channel RHE_CH03180 of Rhizobium etli (strain ATCC 51251 / DSM 11541 / JCM 21823 / NBRC 15573 / CFN 42).